A 395-amino-acid polypeptide reads, in one-letter code: Ribosomal RNA large subunit methyltransferase G (395 aa).

The protein belongs to the methyltransferase superfamily. RlmG family.

The protein localises to the cytoplasm. The catalysed reaction is guanosine(1835) in 23S rRNA + S-adenosyl-L-methionine = N(2)-methylguanosine(1835) in 23S rRNA + S-adenosyl-L-homocysteine + H(+). Its function is as follows. Specifically methylates the guanine in position 1835 (m2G1835) of 23S rRNA. The protein is Ribosomal RNA large subunit methyltransferase G of Yersinia pseudotuberculosis serotype O:1b (strain IP 31758).